The sequence spans 78 residues: MSTIEERVKKIIGEQLGVKQEEVVNTASFVEDLGADSLDTVELVMALEEEFDTEIPDEEAEKITTVQAAIDYINGHQA.

Residues 2–77 form the Carrier domain; the sequence is STIEERVKKI…AAIDYINGHQ (76 aa). The residue at position 37 (Ser-37) is an O-(pantetheine 4'-phosphoryl)serine.

The protein belongs to the acyl carrier protein (ACP) family. Post-translationally, 4'-phosphopantetheine is transferred from CoA to a specific serine of apo-ACP by AcpS. This modification is essential for activity because fatty acids are bound in thioester linkage to the sulfhydryl of the prosthetic group.

The protein resides in the cytoplasm. Its pathway is lipid metabolism; fatty acid biosynthesis. Carrier of the growing fatty acid chain in fatty acid biosynthesis. The protein is Acyl carrier protein of Erwinia tasmaniensis (strain DSM 17950 / CFBP 7177 / CIP 109463 / NCPPB 4357 / Et1/99).